We begin with the raw amino-acid sequence, 535 residues long: Probable anion transporter 2, chloroplastic (535 aa).

The transit peptide at 1–95 directs the protein to the chloroplast; it reads MASIRSCVSV…RERAVAAMCS (95 aa). 12 helical membrane passes run 125 to 145, 160 to 180, 191 to 211, 215 to 235, 254 to 274, 279 to 299, 343 to 363, 381 to 401, 413 to 433, 443 to 463, 483 to 503, and 504 to 524; these read VVAL…VMSV, FLGI…MVGG, VMAG…WAAS, IMLL…FPTM, ISMG…PIIM, LAGT…VWLF, IEMW…FVLL, AAWF…VAGA, VALV…VSLL, VAAV…AGYF, GIGT…VQWL, and GSFQ…TVFY.

This sequence belongs to the major facilitator superfamily. Sodium/anion cotransporter (TC 2.A.1.14) family.

The protein localises to the plastid. It is found in the chloroplast membrane. Functionally, probable anion transporter. The polypeptide is Probable anion transporter 2, chloroplastic (PHT4;2) (Oryza sativa subsp. japonica (Rice)).